The chain runs to 660 residues: Bifunctional polymyxin resistance protein ArnA (660 aa).

Residues 1 to 304 (MKTVVFAYHD…TLGLVQGSRL (304 aa)) form a formyltransferase ArnAFT region. 86-88 (HLI) is a (6R)-10-formyltetrahydrofolate binding site. The active-site Proton donor; for formyltransferase activity is His104. (6R)-10-formyltetrahydrofolate-binding positions include Arg114 and 136-140 (VKRAD). The interval 314-660 (RRTRVLILGV…RTVDLTDKPS (347 aa)) is dehydrogenase ArnADH. Residues Asp347 and 368 to 369 (DI) each bind NAD(+). UDP-alpha-D-glucuronate-binding positions include Ala393, Tyr398, and 432–433 (TS). The Proton acceptor; for decarboxylase activity role is filled by Glu434. Residues Arg460, Asn492, 526–535 (KLIDGGKQKR), and Tyr613 contribute to the UDP-alpha-D-glucuronate site. Catalysis depends on Arg619, which acts as the Proton donor; for decarboxylase activity.

In the N-terminal section; belongs to the Fmt family. UDP-L-Ara4N formyltransferase subfamily. The protein in the C-terminal section; belongs to the NAD(P)-dependent epimerase/dehydratase family. UDP-glucuronic acid decarboxylase subfamily. As to quaternary structure, homohexamer, formed by a dimer of trimers.

The enzyme catalyses UDP-alpha-D-glucuronate + NAD(+) = UDP-beta-L-threo-pentopyranos-4-ulose + CO2 + NADH. The catalysed reaction is UDP-4-amino-4-deoxy-beta-L-arabinose + (6R)-10-formyltetrahydrofolate = UDP-4-deoxy-4-formamido-beta-L-arabinose + (6S)-5,6,7,8-tetrahydrofolate + H(+). It functions in the pathway nucleotide-sugar biosynthesis; UDP-4-deoxy-4-formamido-beta-L-arabinose biosynthesis; UDP-4-deoxy-4-formamido-beta-L-arabinose from UDP-alpha-D-glucuronate: step 1/3. It participates in nucleotide-sugar biosynthesis; UDP-4-deoxy-4-formamido-beta-L-arabinose biosynthesis; UDP-4-deoxy-4-formamido-beta-L-arabinose from UDP-alpha-D-glucuronate: step 3/3. Its pathway is bacterial outer membrane biogenesis; lipopolysaccharide biosynthesis. In terms of biological role, bifunctional enzyme that catalyzes the oxidative decarboxylation of UDP-glucuronic acid (UDP-GlcUA) to UDP-4-keto-arabinose (UDP-Ara4O) and the addition of a formyl group to UDP-4-amino-4-deoxy-L-arabinose (UDP-L-Ara4N) to form UDP-L-4-formamido-arabinose (UDP-L-Ara4FN). The modified arabinose is attached to lipid A and is required for resistance to polymyxin and cationic antimicrobial peptides. In Escherichia coli (strain SMS-3-5 / SECEC), this protein is Bifunctional polymyxin resistance protein ArnA.